The sequence spans 80 residues: Cell division activator CedA (80 aa).

This sequence belongs to the CedA family.

Its function is as follows. Activates the cell division inhibited by chromosomal DNA over-replication. The protein is Cell division activator CedA of Salmonella choleraesuis (strain SC-B67).